We begin with the raw amino-acid sequence, 409 residues long: tRNA(Met) cytidine acetate ligase (409 aa).

ATP-binding positions include Val7–His20, Gly102, Asn169, and Arg194.

It belongs to the TmcAL family.

Its subcellular location is the cytoplasm. It carries out the reaction cytidine(34) in elongator tRNA(Met) + acetate + ATP = N(4)-acetylcytidine(34) in elongator tRNA(Met) + AMP + diphosphate. Catalyzes the formation of N(4)-acetylcytidine (ac(4)C) at the wobble position of elongator tRNA(Met), using acetate and ATP as substrates. First activates an acetate ion to form acetyladenylate (Ac-AMP) and then transfers the acetyl group to tRNA to form ac(4)C34. This chain is tRNA(Met) cytidine acetate ligase, found in Clostridium botulinum (strain Loch Maree / Type A3).